The following is a 568-amino-acid chain: Keratin, type I cytoskeletal 10 (568 aa).

Over residues 1-15 the composition is skewed to low complexity; the sequence is MSVRYSSSKQYSSSR. Residues 1–31 are disordered; that stretch reads MSVRYSSSKQYSSSRSGGGGGGGGGSSFRIS. The segment at 1-135 is head; the sequence is MSVRYSSSKQ…GGDGGLLSGN (135 aa). 6 positions are modified to phosphoserine: S14, S16, S36, S47, S50, and S160. The segment covering 16-26 has biased composition (gly residues); it reads SGGGGGGGGGS. Residues 136 to 171 form a coil 1A region; it reads EKVTMQNLNDRLASYLDKVRALEESNYELEGKIKEW. The IF rod domain maps to 136 to 450; it reads EKVTMQNLND…SLLEGEGSSG (315 aa). Residues 172–192 are linker 1; sequence YEKHGNSSQRAPRDYSKYYQT. The tract at residues 193-284 is coil 1B; that stretch reads IEDLKNQILN…KNHEEEMRDL (92 aa). A linker 12 region spans residues 285–307; sequence QNVSTGDVNVEMNAAPGVDLTEL. Positions 308 to 446 are coil 2; the sequence is LNNMRNQYEQ…QTYRSLLEGE (139 aa). The tail stretch occupies residues 447 to 568; the sequence is GSSGGGGYGG…GESSSKGPRY (122 aa). Residues 485–546 show a composition bias toward gly residues; sequence GGGSSGGGGH…GGGYGGGSSS (62 aa). Residues 485–568 are disordered; it reads GGGSSGGGGH…GESSSKGPRY (84 aa). Residues 547-568 show a composition bias toward low complexity; the sequence is SGGHKSSSSGSVGESSSKGPRY.

The protein belongs to the intermediate filament family. As to quaternary structure, heterotetramer of two type I and two type II keratins. Heterodimer with KRT1. Two heterodimers of KRT1 and KRT10 form a heterotetramer. The KRT10 subunit in the heterotetramer is probably disulfide-linked. As to expression, expressed in skin.

It is found in the secreted. The protein resides in the extracellular space. The protein localises to the cell surface. Its subcellular location is the cytoplasm. In terms of biological role, plays a role in the establishment of the epidermal barrier on plantar skin. Involved in the maintenance of cell layer development and keratin filament bundles in suprabasal cells of the epithelium. The protein is Keratin, type I cytoskeletal 10 of Canis lupus familiaris (Dog).